We begin with the raw amino-acid sequence, 352 residues long: B1 bradykinin receptor (352 aa).

Topologically, residues 1-41 (MAAQTLLELQPSNQSQLSALNTTSCDNAREAWDLLYQVLPI) are extracellular. Asn13 and Asn21 each carry an N-linked (GlcNAc...) asparagine glycan. A helical membrane pass occupies residues 42-62 (FILTICAFGLLGNLFVLSVFL). The Cytoplasmic segment spans residues 63–72 (LLRRRLTVAE). A helical membrane pass occupies residues 73 to 93 (IYLVNLAASDLVFVLGLPFWA). Topologically, residues 94–110 (QNIWNQFNWPFGDLLCR) are extracellular. A disulfide bridge connects residues Cys109 and Cys188. The chain crosses the membrane as a helical span at residues 111–131 (VVNGVIKANLFISIFLMVAIS). At 132–153 (QDRYCVLVHPMASRRRRRRRRA) the chain is on the cytoplasmic side. The helical transmembrane segment at 154–174 (RATCMVIWAVGALLSTPTFLL) threads the bilayer. At 175-206 (RSVSAVQDLNISACILLLPHQAWHVARIVELN) the chain is on the extracellular side. The N-linked (GlcNAc...) asparagine glycan is linked to Asn184. Residues 207–227 (VLGFLLPLAAIIFFNGHILAS) form a helical membrane-spanning segment. The Cytoplasmic portion of the chain corresponds to 228–250 (LRGQGEVSQTRIGGPKDCKTTVL). Residues 251 to 271 (ILTLVAAFLVCWAPYHCFAFL) form a helical membrane-spanning segment. Residues 272 to 294 (EFLFQVRAVRGCFWEDFIDLGLQ) are Extracellular-facing. A helical transmembrane segment spans residues 295-315 (LANFFAFTNSCLNPVIYVFVG). Over 316–326 (RLFRTKVWELY) the chain is Cytoplasmic. Cys329 carries the S-palmitoyl cysteine lipid modification.

The protein belongs to the G-protein coupled receptor 1 family. Bradykinin receptor subfamily. BDKRB1 sub-subfamily.

The protein resides in the cell membrane. Its function is as follows. This is a receptor for bradykinin. Could be a factor in chronic pain and inflammation. The protein is B1 bradykinin receptor (BDKRB1) of Tupaia minor (Pigmy tree shrew).